The chain runs to 598 residues: Arginine--tRNA ligase (598 aa).

Residues 135–145 carry the 'HIGH' region motif; it reads ANPTGPIHIGG. A disordered region spans residues 229 to 248; it reads VDGGTDEKGEPLGEGDSEQR. Over residues 231–248 the composition is skewed to basic and acidic residues; that stretch reads GGTDEKGEPLGEGDSEQR.

This sequence belongs to the class-I aminoacyl-tRNA synthetase family. Monomer.

It localises to the cytoplasm. The enzyme catalyses tRNA(Arg) + L-arginine + ATP = L-arginyl-tRNA(Arg) + AMP + diphosphate. The protein is Arginine--tRNA ligase of Bifidobacterium animalis subsp. lactis (strain AD011).